The chain runs to 239 residues: 1-(5-phosphoribosyl)-5-[(5-phosphoribosylamino)methylideneamino] imidazole-4-carboxamide isomerase (239 aa).

D8 functions as the Proton acceptor in the catalytic mechanism. The active-site Proton donor is the D129.

It belongs to the HisA/HisF family.

The protein localises to the cytoplasm. The enzyme catalyses 1-(5-phospho-beta-D-ribosyl)-5-[(5-phospho-beta-D-ribosylamino)methylideneamino]imidazole-4-carboxamide = 5-[(5-phospho-1-deoxy-D-ribulos-1-ylimino)methylamino]-1-(5-phospho-beta-D-ribosyl)imidazole-4-carboxamide. The protein operates within amino-acid biosynthesis; L-histidine biosynthesis; L-histidine from 5-phospho-alpha-D-ribose 1-diphosphate: step 4/9. In Legionella pneumophila (strain Corby), this protein is 1-(5-phosphoribosyl)-5-[(5-phosphoribosylamino)methylideneamino] imidazole-4-carboxamide isomerase.